Here is a 628-residue protein sequence, read N- to C-terminus: Carbon monoxide dehydrogenase 1 (628 aa).

[4Fe-4S] cluster-binding residues include C44, C52, C53, C56, C61, and C75. Residues H266, C302, C340, C448, C478, and C519 each contribute to the [Ni-4Fe-5S] cluster site.

This sequence belongs to the Ni-containing carbon monoxide dehydrogenase family. As to quaternary structure, homodimer. [4Fe-4S] cluster serves as cofactor. [Ni-4Fe-5S] cluster is required as a cofactor.

It carries out the reaction CO + 2 oxidized [2Fe-2S]-[ferredoxin] + H2O = 2 reduced [2Fe-2S]-[ferredoxin] + CO2 + 2 H(+). In terms of biological role, CODH oxidizes carbon monoxide coupled, via CooF, to the reduction of a hydrogen cation by a hydrogenase (possibly CooH). The sequence is that of Carbon monoxide dehydrogenase 1 (cooS1) from Methanosarcina mazei (strain ATCC BAA-159 / DSM 3647 / Goe1 / Go1 / JCM 11833 / OCM 88) (Methanosarcina frisia).